A 97-amino-acid chain; its full sequence is MATSSKVKKSVRIASGRKRVRQDVRLNAANTSLRSKFRTAIKGVLKAVATGDKAKAGETFKSAQKVIDSIADKGLFHKNKAARYKSRLSAKIKALAA.

It belongs to the bacterial ribosomal protein bS20 family.

Its function is as follows. Binds directly to 16S ribosomal RNA. This is Small ribosomal subunit protein bS20 from Methylibium petroleiphilum (strain ATCC BAA-1232 / LMG 22953 / PM1).